A 150-amino-acid chain; its full sequence is MFEEMILEKVRKEAERIAEEQGLEIFDVQYRRESRGWVLRIIIDNPVGYVSVRDCELFSREMERFLDREDFIEHSYTLEVSSPGLDRPLRGPRDYVRFTGKLAKIVTKDGKTFIGRIESFVDGTITISDEKRKYEINIDDVKRANLEVEF.

It belongs to the RimP family.

The protein localises to the cytoplasm. Required for maturation of 30S ribosomal subunits. The protein is Ribosome maturation factor RimP of Thermotoga maritima (strain ATCC 43589 / DSM 3109 / JCM 10099 / NBRC 100826 / MSB8).